The primary structure comprises 126 residues: Probable prefoldin subunit 6 (126 aa).

The protein belongs to the prefoldin subunit beta family. In terms of assembly, heterohexamer of two PFD-alpha type and four PFD-beta type subunits. Expressed in embryonic blastomeres and gonads.

The protein resides in the cytoplasm. Functionally, binds specifically to cytosolic chaperonin (c-CPN) and transfers target proteins to it. Binds to nascent polypeptide chain and promotes folding in an environment in which there are many competing pathways for nonnative proteins. Required for positioning of the mitotic spindle. In Caenorhabditis elegans, this protein is Probable prefoldin subunit 6 (pfd-6).